Consider the following 301-residue polypeptide: Ribosomal protein L11 methyltransferase (301 aa).

Positions 130, 151, 172, and 239 each coordinate S-adenosyl-L-methionine.

Belongs to the methyltransferase superfamily. PrmA family.

It localises to the cytoplasm. The catalysed reaction is L-lysyl-[protein] + 3 S-adenosyl-L-methionine = N(6),N(6),N(6)-trimethyl-L-lysyl-[protein] + 3 S-adenosyl-L-homocysteine + 3 H(+). Methylates ribosomal protein L11. The chain is Ribosomal protein L11 methyltransferase from Campylobacter hominis (strain ATCC BAA-381 / DSM 21671 / CCUG 45161 / LMG 19568 / NCTC 13146 / CH001A).